Reading from the N-terminus, the 199-residue chain is NAD(P)H dehydrogenase (quinone) (199 aa).

The 187-residue stretch at 4–190 (VLVLYYSAYG…AGARYQGRRV (187 aa)) folds into the Flavodoxin-like domain. Residues 10-15 (SAYGHI) and 78-80 (TRF) contribute to the FMN site. Y12 serves as a coordination point for NAD(+). W98 is a binding site for substrate. FMN-binding positions include 113–119 (STATQHG) and H134.

This sequence belongs to the WrbA family. Requires FMN as cofactor.

The enzyme catalyses a quinone + NADH + H(+) = a quinol + NAD(+). The catalysed reaction is a quinone + NADPH + H(+) = a quinol + NADP(+). The protein is NAD(P)H dehydrogenase (quinone) of Methylocella silvestris (strain DSM 15510 / CIP 108128 / LMG 27833 / NCIMB 13906 / BL2).